Consider the following 750-residue polypeptide: Photosystem I P700 chlorophyll a apoprotein A1 (750 aa).

8 helical membrane passes run V70–A93, L156–H179, L195–L219, I291–Y309, W346–Y369, L385–V411, A433–H455, and F531–L549. Residues C573 and C582 each contribute to the [4Fe-4S] cluster site. The next 2 helical transmembrane spans lie at H589–W610 and L664–F686. Position 675 (H675) interacts with chlorophyll a'. Chlorophyll a-binding residues include M683 and Y691. Phylloquinone is bound at residue W692. The chain crosses the membrane as a helical span at residues A724–A744.

This sequence belongs to the PsaA/PsaB family. In terms of assembly, the PsaA/B heterodimer binds the P700 chlorophyll special pair and subsequent electron acceptors. PSI consists of a core antenna complex that captures photons, and an electron transfer chain that converts photonic excitation into a charge separation. The eukaryotic PSI reaction center is composed of at least 11 subunits. P700 is a chlorophyll a/chlorophyll a' dimer, A0 is one or more chlorophyll a, A1 is one or both phylloquinones and FX is a shared 4Fe-4S iron-sulfur center. serves as cofactor.

Its subcellular location is the plastid. It localises to the chloroplast thylakoid membrane. It catalyses the reaction reduced [plastocyanin] + hnu + oxidized [2Fe-2S]-[ferredoxin] = oxidized [plastocyanin] + reduced [2Fe-2S]-[ferredoxin]. Functionally, psaA and PsaB bind P700, the primary electron donor of photosystem I (PSI), as well as the electron acceptors A0, A1 and FX. PSI is a plastocyanin-ferredoxin oxidoreductase, converting photonic excitation into a charge separation, which transfers an electron from the donor P700 chlorophyll pair to the spectroscopically characterized acceptors A0, A1, FX, FA and FB in turn. Oxidized P700 is reduced on the lumenal side of the thylakoid membrane by plastocyanin. This Eucalyptus globulus subsp. globulus (Tasmanian blue gum) protein is Photosystem I P700 chlorophyll a apoprotein A1.